The primary structure comprises 335 residues: Holliday junction branch migration complex subunit RuvB (335 aa).

The tract at residues Met-1–Tyr-181 is large ATPase domain (RuvB-L). ATP-binding positions include Leu-20, Arg-21, Gly-62, Lys-65, Thr-66, Thr-67, Glu-128–Tyr-130, Arg-171, Tyr-181, and Arg-218. Residue Thr-66 coordinates Mg(2+). Positions Lys-182–Gly-252 are small ATPAse domain (RuvB-S). The interval Glu-255–Glu-335 is head domain (RuvB-H). Arg-309 and Arg-314 together coordinate DNA.

Belongs to the RuvB family. In terms of assembly, homohexamer. Forms an RuvA(8)-RuvB(12)-Holliday junction (HJ) complex. HJ DNA is sandwiched between 2 RuvA tetramers; dsDNA enters through RuvA and exits via RuvB. An RuvB hexamer assembles on each DNA strand where it exits the tetramer. Each RuvB hexamer is contacted by two RuvA subunits (via domain III) on 2 adjacent RuvB subunits; this complex drives branch migration. In the full resolvosome a probable DNA-RuvA(4)-RuvB(12)-RuvC(2) complex forms which resolves the HJ.

It is found in the cytoplasm. The enzyme catalyses ATP + H2O = ADP + phosphate + H(+). Functionally, the RuvA-RuvB-RuvC complex processes Holliday junction (HJ) DNA during genetic recombination and DNA repair, while the RuvA-RuvB complex plays an important role in the rescue of blocked DNA replication forks via replication fork reversal (RFR). RuvA specifically binds to HJ cruciform DNA, conferring on it an open structure. The RuvB hexamer acts as an ATP-dependent pump, pulling dsDNA into and through the RuvAB complex. RuvB forms 2 homohexamers on either side of HJ DNA bound by 1 or 2 RuvA tetramers; 4 subunits per hexamer contact DNA at a time. Coordinated motions by a converter formed by DNA-disengaged RuvB subunits stimulates ATP hydrolysis and nucleotide exchange. Immobilization of the converter enables RuvB to convert the ATP-contained energy into a lever motion, pulling 2 nucleotides of DNA out of the RuvA tetramer per ATP hydrolyzed, thus driving DNA branch migration. The RuvB motors rotate together with the DNA substrate, which together with the progressing nucleotide cycle form the mechanistic basis for DNA recombination by continuous HJ branch migration. Branch migration allows RuvC to scan DNA until it finds its consensus sequence, where it cleaves and resolves cruciform DNA. In Campylobacter jejuni subsp. doylei (strain ATCC BAA-1458 / RM4099 / 269.97), this protein is Holliday junction branch migration complex subunit RuvB.